The chain runs to 170 residues: Protein Rex (170 aa).

Positions 1–16 (MPKTRRQRTRRARRNR) are enriched in basic residues. Disordered regions lie at residues 1–27 (MPKTRRQRTRRARRNRPPTPWPISQDL) and 69–170 (VQST…GEKP). A Nuclear localization signal, and RNA-binding (RxRE) motif is present at residues 2-19 (PKTRRQRTRRARRNRPPT). Residues 57–71 (PPAYIDMPSWPPVQS) form a homomultimerization region. Over residues 82–95 (ALSALLSNTLSLAS) the composition is skewed to low complexity. The Nuclear export signal motif lies at 83 to 94 (LSALLSNTLSLA). A homomultimerization region spans residues 124–132 (PSFNQCEST). Residues 143–160 (PSGISSPPSPSPNLASVP) show a composition bias toward low complexity. Residues Ser151 and Ser153 each carry the phosphoserine; by host modification. The span at 161–170 (KTSTPPGEKP) shows a compositional bias: polar residues.

The protein belongs to the deltaretrovirus Rex protein family. Homomultimer. Post-translationally, phosphorylation is essential for RNA-binding and function.

The protein resides in the host nucleus. It localises to the host nucleolus. It is found in the host cytoplasm. Its function is as follows. Rex escorts unspliced gag-pro-pol and singly spliced env mRNAs out of the nucleus of infected cells. These mRNAs carry a recognition sequence called Rex responsive element (RxRE or XRE) located at the 3' region of the long terminal repeat (LTR). This function is essential since most HTLV proteins are translated from unspliced or partially spliced pre-mRNAs that cannot exit the nucleus by the pathway used by fully processed cellular mRNAs. This Human T-cell leukemia virus 2 (HTLV-2) protein is Protein Rex.